Reading from the N-terminus, the 940-residue chain is Isoleucine--tRNA ligase (940 aa).

Positions Pro58–His68 match the 'HIGH' region motif. Glu564 is an L-isoleucyl-5'-AMP binding site. The short motif at Lys605 to Ser609 is the 'KMSKS' region element. Lys608 contacts ATP. Cys903, Cys906, Cys923, and Cys926 together coordinate Zn(2+).

It belongs to the class-I aminoacyl-tRNA synthetase family. IleS type 1 subfamily. Monomer. Zn(2+) serves as cofactor.

Its subcellular location is the cytoplasm. It catalyses the reaction tRNA(Ile) + L-isoleucine + ATP = L-isoleucyl-tRNA(Ile) + AMP + diphosphate. Catalyzes the attachment of isoleucine to tRNA(Ile). As IleRS can inadvertently accommodate and process structurally similar amino acids such as valine, to avoid such errors it has two additional distinct tRNA(Ile)-dependent editing activities. One activity is designated as 'pretransfer' editing and involves the hydrolysis of activated Val-AMP. The other activity is designated 'posttransfer' editing and involves deacylation of mischarged Val-tRNA(Ile). The sequence is that of Isoleucine--tRNA ligase from Shewanella baltica (strain OS185).